Here is a 190-residue protein sequence, read N- to C-terminus: Prostaglandin-H2 D-isomerase (190 aa).

A signal peptide spans 1 to 22 (MATHHTLWMGLALLGVLGDLQA). S29 carries O-linked (GalNAc...) serine glycosylation. An N-linked (GlcNAc...) (complex) asparagine glycan is attached at N51. Catalysis depends on C65, which acts as the Nucleophile. N78 carries an N-linked (GlcNAc...) (complex) asparagine glycan. A disulfide bridge links C89 with C186.

Belongs to the calycin superfamily. Lipocalin family. Monomer. N- and O-glycosylated. Both N-glycosylation recognition sites are almost quantitatively occupied by N-glycans of the biantennary complex type, with a considerable proportion of structures bearing a bisecting GlcNAc. N-glycan at Asn-78: dHex1Hex5HexNAc4. Agalacto structure as well as sialylated and nonsialylated oligosaccharides bearing alpha2-3- and/or alpha2-6-linked NeuNAc are present. In terms of tissue distribution, abundant in the brain and CNS, where it is expressed in tissues of the blood-brain barrier and secreted into the cerebro-spinal fluid. Abundantly expressed in the heart. In the male reproductive system, it is expressed in the testis, epididymis and prostate, and is secreted into the seminal fluid. Expressed in the eye and secreted into the aqueous humor. Lower levels detected in various tissue fluids such as serum, normal urine, ascitic fluid and tear fluid. Also found in a number of other organs including ovary, fimbriae of the fallopian tubes, kidney, leukocytes.

Its subcellular location is the rough endoplasmic reticulum. It is found in the nucleus membrane. It localises to the golgi apparatus. The protein resides in the cytoplasm. The protein localises to the perinuclear region. Its subcellular location is the secreted. It carries out the reaction prostaglandin H2 = prostaglandin D2. Catalyzes the conversion of PGH2 to PGD2, a prostaglandin involved in smooth muscle contraction/relaxation and a potent inhibitor of platelet aggregation. Involved in a variety of CNS functions, such as sedation, NREM sleep and PGE2-induced allodynia, and may have an anti-apoptotic role in oligodendrocytes. Binds small non-substrate lipophilic molecules, including biliverdin, bilirubin, retinal, retinoic acid and thyroid hormone, and may act as a scavenger for harmful hydrophobic molecules and as a secretory retinoid and thyroid hormone transporter. Possibly involved in development and maintenance of the blood-brain, blood-retina, blood-aqueous humor and blood-testis barrier. It is likely to play important roles in both maturation and maintenance of the central nervous system and male reproductive system. Involved in PLA2G3-dependent maturation of mast cells. PLA2G3 is secreted by immature mast cells and acts on nearby fibroblasts upstream to PTDGS to synthesize PGD2, which in turn promotes mast cell maturation and degranulation via PTGDR. This Homo sapiens (Human) protein is Prostaglandin-H2 D-isomerase (PTGDS).